The chain runs to 433 residues: Myricetin 3-O-glucosyl 1,2-rhamnoside 6'-O-caffeoyltransferase AT1 (433 aa).

Residues His-157 and Asp-375 each act as proton acceptor in the active site.

Belongs to the plant acyltransferase family. In terms of tissue distribution, expressed in young cromes.

The enzyme catalyses myricetin 3-O-[beta-D-glucosyl-(1-&gt;2)-alpha-L-rhamnoside] + (E)-caffeoyl-CoA = myricetin 3-O-[(6-O-(E)-caffeoyl-beta-D-glucosyl)-(1-&gt;2)-alpha-L-rhamnoside] + CoA. It participates in flavonoid metabolism. Functionally, caffeoyltransferase involved in montbretin A (MbA) biosynthesis. Catalyzes the caffeoylation of myricetin 3-O-beta-D-glucosyl 1,2-alpha-L-rhamnoside (MRG) to produce myricetin 3-O-(6'-O-caffeoyl)-beta-D-glucosyl 1,2-alpha-L-rhamnoside (mini-MbA), a precursor of MbA. Mini-MbA and MbA are potent inhibitors of human pancreatic alpha-amylase and are being developed as drug candidates to treat type-2 diabetes. In vitro, is able to catalyze the caffeoylation of quercetin 3-O-sophoroside (QGG), although QGG may not be a physiological substrate in vivo. In vitro, can use coumaryl-CoA, feruloyl-CoA and acetyl-CoA, although these three acyl donors may not be physiological in vivo. The chain is Myricetin 3-O-glucosyl 1,2-rhamnoside 6'-O-caffeoyltransferase AT1 from Crocosmia x crocosmiiflora (Montbretia).